The following is a 562-amino-acid chain: Formate--tetrahydrofolate ligase (562 aa).

An ATP-binding site is contributed by threonine 71–serine 78.

The protein belongs to the formate--tetrahydrofolate ligase family.

The enzyme catalyses (6S)-5,6,7,8-tetrahydrofolate + formate + ATP = (6R)-10-formyltetrahydrofolate + ADP + phosphate. Its pathway is one-carbon metabolism; tetrahydrofolate interconversion. This chain is Formate--tetrahydrofolate ligase, found in Bacillus cereus (strain AH187).